A 125-amino-acid chain; its full sequence is Major intrinsically disordered NOTCH2-binding receptor 1-like (125 aa).

Asparagine 37 is a glycosylation site (N-linked (GlcNAc...) asparagine). Residues 100-120 traverse the membrane as a helical segment; the sequence is FAFITLFVCAVVIIITVPIVV.

It belongs to the MINAR family. Interacts with NOTCH2. In terms of tissue distribution, highly expressed in the auditory hair cells.

It is found in the lysosome membrane. Its subcellular location is the endoplasmic reticulum membrane. Binds cholesterol and may regulate the distribution and homeostasis of cholesterol in hair cells. May play a role in angiogenesis. The protein is Major intrinsically disordered NOTCH2-binding receptor 1-like of Danio rerio (Zebrafish).